Consider the following 149-residue polypeptide: Transcriptional repressor NrdR (149 aa).

A zinc finger lies at 3–34; the sequence is CPFCAAVDTKVIDSRLVSDGSQVRRRRQCLDC. Positions 49–139 constitute an ATP-cone domain; the sequence is PRVIKSDDVR…VYRSFEDIRE (91 aa).

It belongs to the NrdR family. The cofactor is Zn(2+).

Functionally, negatively regulates transcription of bacterial ribonucleotide reductase nrd genes and operons by binding to NrdR-boxes. This chain is Transcriptional repressor NrdR, found in Yersinia enterocolitica serotype O:8 / biotype 1B (strain NCTC 13174 / 8081).